The chain runs to 231 residues: Protein PIMREG (231 aa).

The segment at 1-44 (MASQWQGMRTSVRRRSLLKEEQLEKKEVTRSAGGHPETGPLGSL) is disordered. 2 positions are modified to phosphoserine: serine 11 and serine 16. 2 consecutive short sequence motifs (D-box) follow at residues 14–17 (RRSL) and 53–56 (PLRA). Residues 17-29 (LLKEEQLEKKEVT) show a composition bias toward basic and acidic residues. Serine 72 carries the post-translational modification Phosphoserine. 2 disordered regions span residues 115-138 (KVRRKRGAQKDRGSPPPSLSQKNT) and 152-197 (HLRL…DLEP). The residue at position 128 (serine 128) is a Phosphoserine; by Uhmk1; in vitro. Residues 178-190 (PCSSTEPLCSPSE) show a composition bias toward polar residues. Phosphoserine occurs at positions 191 and 193.

Interacts with PICALM; this interaction may target PICALM to the nucleus. During mitosis, associates with HDAC2 and MTA2 subunits of the chromatin-remodeling NuRD complex; this association is strongest at prometaphase and decreases as the cell progresses through metaphase and anaphase. Ubiquitinated by the anaphase-promoting complex/cyclosome (APC/C) complex in the presence of FZR1, leading to its degradation by the proteasome during mitotic exit. However, degradation is not essential for normal mitotic progression within a single cell cycle. As to expression, mainly expressed in thymus and ovary. Expressed in all T-cell subpopulations isolated from the thymus, macrophages, pro-erythrocytes, granulocytes, mast cells and progenitor cells.

Its subcellular location is the nucleus. The protein localises to the nucleolus. Its function is as follows. During mitosis, may play a role in the metaphase-to-anaphase transition. In Mus musculus (Mouse), this protein is Protein PIMREG.